We begin with the raw amino-acid sequence, 173 residues long: Photosystem I assembly protein Ycf3 (173 aa).

3 TPR repeats span residues 35-68 (AYIY…EENK), 72-105 (GETL…NPKQ), and 120-153 (GRFA…YPGG).

The protein belongs to the Ycf3 family.

The protein resides in the cellular thylakoid membrane. Essential for the assembly of the photosystem I (PSI) complex. May act as a chaperone-like factor to guide the assembly of the PSI subunits. The polypeptide is Photosystem I assembly protein Ycf3 (Prochlorococcus marinus subsp. pastoris (strain CCMP1986 / NIES-2087 / MED4)).